The sequence spans 216 residues: Uracil phosphoribosyltransferase (216 aa).

5-phospho-alpha-D-ribose 1-diphosphate is bound by residues arginine 84, arginine 109, and 137–145; that span reads DPMLATGGS. Uracil-binding positions include isoleucine 202 and 207–209; that span reads GDA. Aspartate 208 is a 5-phospho-alpha-D-ribose 1-diphosphate binding site.

Belongs to the UPRTase family. The cofactor is Mg(2+).

It carries out the reaction UMP + diphosphate = 5-phospho-alpha-D-ribose 1-diphosphate + uracil. The protein operates within pyrimidine metabolism; UMP biosynthesis via salvage pathway; UMP from uracil: step 1/1. Allosterically activated by GTP. Catalyzes the conversion of uracil and 5-phospho-alpha-D-ribose 1-diphosphate (PRPP) to UMP and diphosphate. This is Uracil phosphoribosyltransferase from Nostoc sp. (strain PCC 7120 / SAG 25.82 / UTEX 2576).